Here is a 254-residue protein sequence, read N- to C-terminus: Vitamin B12 import ATP-binding protein BtuD (254 aa).

Positions 3 to 239 (INYISVGNRL…ENLQQVFETP (237 aa)) constitute an ABC transporter domain. Residue 29-36 (GPNGSGKS) coordinates ATP.

The protein belongs to the ABC transporter superfamily. Vitamin B12 importer (TC 3.A.1.13.1) family. The complex is composed of two ATP-binding proteins (BtuD), two transmembrane proteins (BtuC) and a solute-binding protein (BtuF).

It localises to the cell inner membrane. It catalyses the reaction an R-cob(III)alamin(out) + ATP + H2O = an R-cob(III)alamin(in) + ADP + phosphate + H(+). Its function is as follows. Part of the ABC transporter complex BtuCDF involved in vitamin B12 import. Responsible for energy coupling to the transport system. The polypeptide is Vitamin B12 import ATP-binding protein BtuD (Vibrio vulnificus (strain CMCP6)).